The following is a 355-amino-acid chain: MRILNVSLLVLASSLVAFVECGRDFYKILGVAKNANANQIKKAYRKLAKELHPDRNQDDEMANEKFQDLSSAYEVLSDKEKRAMYDRHGEEGVAKMGGGGGGGHDPFSSFFGDFFGGGGGHGGEEGTPKGADVTIDLFVTLEEVYNGHFVEIKRKKAVYKQTSGTRQCNCRHEMRTEQMGQGRFQMFQVKVCDECPNVKLVQENKVLEVEVEVGADNGHQQIFHGEGEPHIEGDPGDLKFKIRIQKHPRFERKGDDLYTNVTISLQDALNGFEMEIQHLDGHIVKVQRDKVTWPGARLRKKDEGMPSLEDNNKKGMLVVTFDVEFPKTELSDEQKAQIIEILQQNTVKPKAYNGL.

The first 21 residues, 1-21 (MRILNVSLLVLASSLVAFVEC), serve as a signal peptide directing secretion. The region spanning 24-89 (DFYKILGVAK…EKRAMYDRHG (66 aa)) is the J domain.

This is DnaJ homolog dnj-20 from Caenorhabditis elegans.